Consider the following 197-residue polypeptide: Elongation factor Ts (197 aa).

Residues Thr81–Val84 are involved in Mg(2+) ion dislocation from EF-Tu.

This sequence belongs to the EF-Ts family.

It localises to the cytoplasm. In terms of biological role, associates with the EF-Tu.GDP complex and induces the exchange of GDP to GTP. It remains bound to the aminoacyl-tRNA.EF-Tu.GTP complex up to the GTP hydrolysis stage on the ribosome. The polypeptide is Elongation factor Ts (Petrotoga mobilis (strain DSM 10674 / SJ95)).